The sequence spans 20 residues: Catechol 1,2-dioxygenase (20 aa).

The protein belongs to the intradiol ring-cleavage dioxygenase family. Homodimer which dissociates into active monomeric subunits at high ionic strengths. Fe(3+) serves as cofactor.

It carries out the reaction catechol + O2 = cis,cis-muconate + 2 H(+). The protein operates within aromatic compound metabolism; beta-ketoadipate pathway; 5-oxo-4,5-dihydro-2-furylacetate from catechol: step 1/3. This is Catechol 1,2-dioxygenase from Acinetobacter radioresistens.